Reading from the N-terminus, the 677-residue chain is Methionine--tRNA ligase (677 aa).

A 'HIGH' region motif is present at residues 15–25 (PYANGSIHLGH). Zn(2+)-binding residues include C146, C149, C159, and C162. The 'KMSKS' region motif lies at 333-337 (KMSKS). K336 contributes to the ATP binding site. One can recognise a tRNA-binding domain in the interval 575 to 677 (DFAKVDLRVA…AGAKPGHQVK (103 aa)).

Belongs to the class-I aminoacyl-tRNA synthetase family. MetG type 1 subfamily. Homodimer. It depends on Zn(2+) as a cofactor.

It localises to the cytoplasm. The enzyme catalyses tRNA(Met) + L-methionine + ATP = L-methionyl-tRNA(Met) + AMP + diphosphate. Its function is as follows. Is required not only for elongation of protein synthesis but also for the initiation of all mRNA translation through initiator tRNA(fMet) aminoacylation. The protein is Methionine--tRNA ligase of Shigella boydii serotype 18 (strain CDC 3083-94 / BS512).